Here is a 190-residue protein sequence, read N- to C-terminus: Protein GrpE (190 aa).

Residues 21 to 49 (DDLQEEVEATETEETVEEVIEETPEKSEL) are disordered. Residues 23–42 (LQEEVEATETEETVEEVIEE) are compositionally biased toward acidic residues.

The protein belongs to the GrpE family. As to quaternary structure, homodimer.

Its subcellular location is the cytoplasm. Functionally, participates actively in the response to hyperosmotic and heat shock by preventing the aggregation of stress-denatured proteins, in association with DnaK and GrpE. It is the nucleotide exchange factor for DnaK and may function as a thermosensor. Unfolded proteins bind initially to DnaJ; upon interaction with the DnaJ-bound protein, DnaK hydrolyzes its bound ATP, resulting in the formation of a stable complex. GrpE releases ADP from DnaK; ATP binding to DnaK triggers the release of the substrate protein, thus completing the reaction cycle. Several rounds of ATP-dependent interactions between DnaJ, DnaK and GrpE are required for fully efficient folding. The polypeptide is Protein GrpE (Streptococcus pyogenes serotype M3 (strain SSI-1)).